Here is a 128-residue protein sequence, read N- to C-terminus: Sulfurtransferase TusD (128 aa).

The active-site Cysteine persulfide intermediate is the cysteine 78.

This sequence belongs to the DsrE/TusD family. As to quaternary structure, heterohexamer, formed by a dimer of trimers. The hexameric TusBCD complex contains 2 copies each of TusB, TusC and TusD. The TusBCD complex interacts with TusE.

Its subcellular location is the cytoplasm. Part of a sulfur-relay system required for 2-thiolation of 5-methylaminomethyl-2-thiouridine (mnm(5)s(2)U) at tRNA wobble positions. Accepts sulfur from TusA and transfers it in turn to TusE. The polypeptide is Sulfurtransferase TusD (Escherichia coli O127:H6 (strain E2348/69 / EPEC)).